The primary structure comprises 665 residues: Putative phospholipid:diacylglycerol acyltransferase 2 (665 aa).

Residues Leu-48 to Val-68 traverse the membrane as a helical segment. Residue Ser-237 is the Acyl-ester intermediate of the active site. Residues Asp-567 and His-620 each act as charge relay system in the active site.

The protein belongs to the AB hydrolase superfamily. Lipase family.

It localises to the membrane. It carries out the reaction a glycerophospholipid + a 1,2-diacyl-sn-glycerol = a monoacylglycerophospholipid + a triacyl-sn-glycerol. The polypeptide is Putative phospholipid:diacylglycerol acyltransferase 2 (PDAT2) (Arabidopsis thaliana (Mouse-ear cress)).